A 236-amino-acid chain; its full sequence is MADLKASEGDLSDYYMRLKKIFSNETRLQSREASISKRSSRVHKNIISAKEAIERQERDFGKLQKVLLNRNQELERRFTLGEALAQQLEVTRQRNADMEAQLLRHTTEGRQRSNELMECMHSLKQATGTYINHEALPARLNGVSVVRADDGDIKLIPFSLDGNDADGLHTLWRSLHTRTDNNASKWRKLISDQEVAGASPVTPSGSERPKATSKHSNFMPTSIIEIDLTSPTNDAS.

Residues 44 to 106 (KNIISAKEAI…DMEAQLLRHT (63 aa)) are a coiled coil. The segment at 194–217 (EVAGASPVTPSGSERPKATSKHSN) is disordered.

The protein belongs to the SPC25 family. As to quaternary structure, component of the Ndc80 complex, which is composed of Ndc80, Nuf2 and Spc25.

Its subcellular location is the nucleus. The protein resides in the chromosome. The protein localises to the centromere. It is found in the kinetochore. Its function is as follows. Acts as a component of the essential kinetochore-associated Ndc80 complex, which is required for chromosome segregation and spindle checkpoint activity during meiosis and mitosis. Required for kinetochore integrity and the organization of stable microtubule binding sites in the outer plate of the kinetochore. Participates in SAC signaling that responds specifically to disruptions in spindle microtubule dynamics. The NDC80 complex synergistically enhances the affinity of the SKA1 complex for microtubules and may allow the NDC80 complex to track depolymerizing microtubules. The protein is Kinetochore protein Spc25 of Drosophila persimilis (Fruit fly).